The sequence spans 242 residues: 1-(5-phosphoribosyl)-5-[(5-phosphoribosylamino)methylideneamino] imidazole-4-carboxamide isomerase (242 aa).

D8 (proton acceptor) is an active-site residue. Catalysis depends on D129, which acts as the Proton donor.

Belongs to the HisA/HisF family.

It is found in the cytoplasm. It catalyses the reaction 1-(5-phospho-beta-D-ribosyl)-5-[(5-phospho-beta-D-ribosylamino)methylideneamino]imidazole-4-carboxamide = 5-[(5-phospho-1-deoxy-D-ribulos-1-ylimino)methylamino]-1-(5-phospho-beta-D-ribosyl)imidazole-4-carboxamide. It functions in the pathway amino-acid biosynthesis; L-histidine biosynthesis; L-histidine from 5-phospho-alpha-D-ribose 1-diphosphate: step 4/9. This chain is 1-(5-phosphoribosyl)-5-[(5-phosphoribosylamino)methylideneamino] imidazole-4-carboxamide isomerase, found in Dictyoglomus thermophilum (strain ATCC 35947 / DSM 3960 / H-6-12).